The chain runs to 1954 residues: MNKLFYLFILIASLFILTDASHFRFGTISWQPTTDYRTIKFTSNFAYRTTFFYSSTSSIKVGNLVNVGTLNFGSGVGSVTVSVTVTDFDVKNNWFTGTFTTTKAYPAQNSGTIREYTAIFTSCCRISSLLNNKDASWNITTSVQIDNKNELSMVNWSPVSGMIPIVQVVANKNNNFRVIASDQNVQNADSSALTFSFSKVYTMTQPSGMTIDSKGNCYFLPTQIGLYSTQIYILDSRGAYIVVDFILQSVAEPGTCDPTCSNAGTACNQNSQCKGCTNSGSTTIDTCTTSNYPPDFVSPPTPDDGDTKLFPIGASTSLTFSCKTIMSGRSTTIQTANLPVGVTTKTPVTGATSNTTITWTPTTANTGSYVVSLVCSDSTGLTSSVRSFTILVAKPDCGNGGYTESGVCKCVDNWDPASKCFECKDGYYGENCVAVPPCVNGVPNSGINGDGKCLCSNGWTGADCSISSSQSCKDLSNSNTSISYSNPSFVNPTKVQVYLTSTPNYEVPTIVSIPNPINNLDVYVLVDANLASTTAFGYIKSGMSTFVSNIENICETAQFGIGYFSDYTPSPISFSPSQVMGSPIAAAIGLYKPATYSTTSNGNSLLAATDAASASVGWNSGSFKVIVIITDSDHSSSSAQITAFTNKFIGKSIVPVVVSFGASSMTNWNSALTSAGFGSVVTASGTSASDWSAKANTGVKNVLSKIVYKSDPTATGSSFVSSVPSTVTVSSSSSTQQTVNGLKLSLPSGTTIVSPVATISAMGYGQTDISINYNRPPVATSGSFSVNQNSLATFKLTGTDPDANILQFKFTTFLTANAGVITDSNGKDVSKQQSNYYAASEIFTYTPFENYLASNTIRFVAFDGCVESNTYATISITINKVNQLPECSSISSTITTTLNTQSTFSMTATDFEDASPFLQFTKPTDLTAYGTFTYKGASITSSTKITTGDSVIFTQTVNPKNDATVTLEFRAIDTSNAFSQASCSVSFKIQHANVAPVSSSTSPISVIPRGSVSLTLVSTDSDSTKALFTITAIKNGNNGNFYTCSTNDCSCTSGSSDSTIISLKDQFSGISYSSTKANKLICFTNGEPSAISNYASISFTSTDDEGLESNTVSVVVNIVGDRANVAPVVTKIQDYSVYQDYLDSDAHVVTGTDADIDDYNPPNVNNLIAIITTPPSNGILVTVQNGNNVATQGNAPFTHYYRPNPGFKGTDSYSYQVMDTFKETSSVESTTVTVNPINHKPTLTVNSYSFTSQSGAGETQTLVTYDFDGDNVLCSVQAAPKQISMYDSENELITTLPKSLSSNSYSFKLLDASKISPTPFSSFSDSFIISCKDDSKLTTPYGVLSTGNVTGFVQFTYINTPPTTKGIQVELDQDTTEPFTFNGTDIESPSDLKAKIYALPANGQLLNGNVVLTSKLIGEETYELDALSYKPNAGLSNWNTIDNIGPLDSIPYSVVDQQGLVSDSDVVTFSVRPRNPPVYTGADVIDVLQNTRYPLNVQGKVGNGGSEVNIQVLKFSGRGTLSIAHSMGSEGTMDTEITSYPNSQTGSTSYNFAYMPPHNEYGNDFDFIEFKLFDGDLYSELYTITVNVIHVNQPPTIQLISYKVLDDTSKDNGEVLFDSTYIVNMNINTSVLIKYTGSDVDVDQVTPLLSTVTTALRGTLYTKDETVPDLKGSIIDRNHTTVEQSSDGYYYVVYSPVPDSSGNSYVRIPFFMTDNGGLDSPTLTAVINVNRYNIPPFVLAGNKTYSTTTKLALSVENVQFDDPDSGKSNNVSIVVSIVGENDENVASLEDIKISLKRMQNCELHTSLASISCLDTKSALNESIQTITVNAVTAGNYRLKLFVDDLGYNAPSAIRAQSHMNATGYVDVTFEEAETTTQTNDNKTVLTGAIAGAAAGTALIAAAAWRLLRKAAPPTDTFFSEAAFLGDGVSSNPLYEQSASAAENPLYQSASDTTD.

A signal peptide spans 1 to 20; the sequence is MNKLFYLFILIASLFILTDA. Residues 21-1883 are Extracellular-facing; sequence SHFRFGTISW…TTTQTNDNKT (1863 aa). 2 N-linked (GlcNAc...) asparagine glycosylation sites follow: Asn138 and Asn354. The EGF-like domain occupies 428–465; sequence YGENCVAVPPCVNGVPNSGINGDGKCLCSNGWTGADCS. 2 disulfide bridges follow: Cys438/Cys453 and Cys455/Cys464. A glycan (N-linked (GlcNAc...) asparagine) is linked at Asn479. The 186-residue stretch at 521 to 706 folds into the VWFA domain; the sequence is DVYVLVDANL…TGVKNVLSKI (186 aa). N-linked (GlcNAc...) asparagine glycosylation is found at Asn1348, Asn1382, Asn1628, Asn1678, Asn1742, Asn1770, Asn1820, Asn1860, and Asn1881. A helical membrane pass occupies residues 1884 to 1904; the sequence is VLTGAIAGAAAGTALIAAAAW. Topologically, residues 1905–1954 are cytoplasmic; it reads RLLRKAAPPTDTFFSEAAFLGDGVSSNPLYEQSASAAENPLYQSASDTTD.

This sequence belongs to the SIB family. As to quaternary structure, interacts with talA/talin.

The protein resides in the membrane. Implicated in cellular adhesion. The sequence is that of Integrin beta-like protein C (sibC) from Dictyostelium discoideum (Social amoeba).